The chain runs to 232 residues: Small ribosomal subunit protein uS2 (232 aa).

Belongs to the universal ribosomal protein uS2 family.

This is Small ribosomal subunit protein uS2 from Syntrophomonas wolfei subsp. wolfei (strain DSM 2245B / Goettingen).